The sequence spans 220 residues: Large ribosomal subunit protein uL3 (220 aa).

Positions F127 to G155 are disordered.

It belongs to the universal ribosomal protein uL3 family. In terms of assembly, part of the 50S ribosomal subunit. Forms a cluster with proteins L14 and L19.

Its function is as follows. One of the primary rRNA binding proteins, it binds directly near the 3'-end of the 23S rRNA, where it nucleates assembly of the 50S subunit. This chain is Large ribosomal subunit protein uL3, found in Staphylococcus aureus (strain JH9).